The sequence spans 194 residues: Calcium channel flower (194 aa).

Residues 1 to 34 (MSFAEKITGLLARPNQQDPIGPEQPWYLKYGSRL) lie on the Cytoplasmic side of the membrane. The chain crosses the membrane as a helical span at residues 35 to 55 (LGIVAAFFAILFGLWNVFSII). At 56 to 65 (TLSVSCLVAG) the chain is on the extracellular side. A helical transmembrane segment spans residues 66–88 (ILQMVAGFVVMLLEAPCCFVCFG). The Cytoplasmic portion of the chain corresponds to 89–106 (QVNEIAEKVESKPLYFRA). The chain crosses the membrane as a helical span at residues 107–127 (GLYIAMAIPPIILCFGLASLF). The Extracellular segment spans residues 128–194 (GSGLIFGTGV…TGAVGTDSNV (67 aa)). Important for promoting apoptosis stretches follow at residues 135-157 (TGVV…RAAA) and 135-192 (TGVV…GTDS).

Belongs to the calcium channel flower family. In terms of assembly, associates with the dally/ magu complex. As to quaternary structure, homomultimer. Associates with the dally/ magu complex. As to expression, detected in the imaginal wing disk (at protein level). In terms of tissue distribution, detected throughout the adult brain, including the optic lobe but, at much lower levels of expression than isoform Lose-A. Detected in the optic lobe (at protein level). Detected throughout the adult brain, including the optic lobe. Expressed in damaged and undamaged optic lobe neurons. As to expression, expressed in optic lobe neurons, with higher levels of expression in suboptimal neurons. Specifically expressed in injury-damaged optic lobe neurons.

It is found in the cell membrane. Its subcellular location is the cytoplasmic vesicle. The protein localises to the secretory vesicle. The protein resides in the synaptic vesicle membrane. It localises to the presynaptic cell membrane. It is found in the endosome. Its subcellular location is the synaptic vesicle. Channel activity is inhibited by La(3+), which reduces Ca(2+) influx and thus inhibits it's function in promoting activity-dependent bulk endocytosis (ADBE) in response to high stimuli. Its function is as follows. Transmembrane protein which mediates synaptic endocytosis, fitness-based cell culling, neuronal culling, morphogen gradient scaling, and calcium transport. Regulates synaptic endocytosis and hence couples exo- with endocytosis. Controls two major modes of synaptic vesicle (SV) endocytosis in the synaptic boutons of neuromuscular junctions (NMJs); Ca(2+) channel-independent Clathrin-mediated endocytosis (CME) in response to mild stimulation, and Ca(2+) channel-dependent activity-dependent bulk endocytosis (ADBE) in response to strong stimulation. Functions in ADBE and subsequent SV reformation from bulk endosomes by initiating Ca(2+) channel-dependent phosphatidylinositol 4,5-bisphosphate (PtdIns(4,5)P2) compartmentalization in synaptic boutons. There it acts at the periactive zone to provide the low Ca(2+) levels required to initiate Calcineurin activation and upregulate PtdIns(4,5)P2. Conversely PtdIns(4,5)P2 enhances fwe Ca(2+) channel-activity, establishing a positive feedback loop that induces PtdIns(4,5)P2 microdomain at the periactive zone. These microdomains trigger bulk membrane invagination (i.e. ADBE) by triggering actin polymerization while also promoting localization of fwe to bulk endosomes, thereby removing the ADBE trigger to reduce endocytosis and prevent excess membrane uptake. PtdIns(4,5)P2 then promotes SV reformation from the bulk endosomes, to coordinate ADBE and subsequent SV reformation. Different combinations of the flower isoforms at the cell membrane are also required for the identification and elimination of suboptimal or supernumerary cells during development, regeneration, and adulthood. Required for the recognition and elimination of unfit cells in the developing wing during cell competition. Also required for efficient identification and elimination of injured, damaged and/or dysfunctional neurons during regeneration of the adult brain. In the developing pupal retina, mediates the elimination of unwanted postmitotic neurons, including supernumerary photoreceptor neurons that form at the periphery of the retina and are contained within incomplete ommatidia units. Downstream of the flower fitness fingerprints, cells identified as unwanted or unfit are eliminated via apoptosis through the expression of ahuizotl (azot). However, the cells marked for elimination by the flower isoforms only undergo apoptosis if additional thresholds are met; (1) their neighboring fit/healthy cells express different levels of the fwe isoforms, and (2) the levels of the protective signal SPARC expressed by the loser or unwanted cells are unable to inhibit caspase activation. These additional thresholds for flower-mediated apoptosis, allows useful cells to recover from transient and limited stress before they are unnecessarily eliminated. Functions with dally and magu in a mechanism of scaling, which utilises apoptosis to ensure that the dpp morphogen gradient, which mediates organ growth, remains proportional to the size of the growing wing. In this mechanism, fwe represses dally- and Magu-dependent activity in expanding the gradient, and dally/Magu inhibits fwe-dependent apoptosis to keep cell death rate low. When the levels of these different proteins are optimally regulated the gradient correctly scales with organ growth but when this fails, fwe-mediated apoptosis is activated to trim the developing tissue to match the correct size of the gradient. Functions with the other flower isoforms to produce tissue-specific fitness fingerprints that identify unfit or fit cells during cell selection processes in order to maintain tissue health. In the wing imaginal disk, this isoform is highly expressed in healthy/normal cells but is down-regulated in cells with decreased fitness. During cell competition, if levels of this isoform in unfit cells is lower than in the surrounding neighboring cells, the suboptimal cells are recognized as 'loser' cells, and undergo elimination via apoptosis to be replaced by the surrounding healthy 'winner' cell population. In terms of biological role, functions with the other flower isoforms to produce tissue-specific fitness fingerprints that identify unfit or fit cells during cell selection processes in order to maintain tissue health. In the wing imaginal disk, this isoform displays low levels of expression in healthy/normal cells but is up-regulated in cells with decreased fitness. During cell competition, if levels of this isoform in unfit cells is higher than in the surrounding neighboring cells, the suboptimal cells are recognized as 'loser' cells, and undergo elimination via apoptosis to be replaced by the surrounding healthy 'winner' cell population. Functionally, functions with the other flower isoforms to produce tissue-specific fitness fingerprints that identify unfit cells for cell selection processes during development, regeneration, and to maintain tissue health. During cell competition in certain tissues, marks suboptimal or damaged cells as 'loser' cells. In cells of the wing imaginal disk and damaged or dysfunctional neurons in the adult optic lobe, this isoform displays low to no expression in healthy/normal cells but is up-regulated in cells with decreased fitness or damage-affected neurons. During cell competition, if levels of this isoform in unfit cells is higher than in the surrounding neighboring cells, the suboptimal cells are recognized as 'loser' cells, and undergo elimination via apoptosis to be replaced by the surrounding healthy/undamaged 'winner' cell population. In the developing pupal retina, also required for the recognition and elimination of postmitotic neurons, including supernumerary photoreceptor neurons that form at the periphery of the retina and are contained within incomplete ommatidia units. Activity at the peripheral retina is induced by the wg signaling pathway but, once activated, it promotes apoptosis of supernumerary photoreceptor neurons independently of wg signaling and snail function. The polypeptide is Calcium channel flower (fwe) (Drosophila melanogaster (Fruit fly)).